Consider the following 72-residue polypeptide: Putative membrane protein insertion efficiency factor (72 aa).

This sequence belongs to the UPF0161 family.

Its subcellular location is the cell inner membrane. Its function is as follows. Could be involved in insertion of integral membrane proteins into the membrane. This chain is Putative membrane protein insertion efficiency factor, found in Amoebophilus asiaticus (strain 5a2).